Consider the following 328-residue polypeptide: Serine protease 27 (328 aa).

Residues 1–22 (MRQPHITALLLLPLLLRSGTEG) form the signal peptide. The propeptide at 23–37 (AEAMRACGHPRMFNR) is activation peptide. Positions 38 to 280 (MVGGEDALEG…HYQWIHQIIP (243 aa)) constitute a Peptidase S1 domain. An intrachain disulfide couples cysteine 63 to cysteine 79. The active-site Charge relay system is the histidine 78. Residue asparagine 82 is glycosylated (N-linked (GlcNAc...) asparagine). Aspartate 127 serves as the catalytic Charge relay system. 3 disulfides stabilise this stretch: cysteine 161–cysteine 238, cysteine 194–cysteine 217, and cysteine 228–cysteine 256. Residue serine 232 is the Charge relay system of the active site.

It belongs to the peptidase S1 family.

The protein localises to the secreted. The protein is Serine protease 27 (Prss27) of Rattus norvegicus (Rat).